Consider the following 406-residue polypeptide: Cyclin-dependent kinase 4 homolog (406 aa).

The Protein kinase domain maps to 102–388 (TFLFQALGKG…ARGALSHPFL (287 aa)). Residues 108 to 116 (LGKGAYGNV) and K131 contribute to the ATP site. D233 (proton acceptor) is an active-site residue. Mg(2+) is bound by residues N238 and D251.

It belongs to the protein kinase superfamily. CMGC Ser/Thr protein kinase family. CDC2/CDKX subfamily. Interacts with cyd-1; the interaction is likely involved in regulating cdk-4 activity. Mg(2+) serves as cofactor.

It catalyses the reaction L-seryl-[protein] + ATP = O-phospho-L-seryl-[protein] + ADP + H(+). The enzyme catalyses L-threonyl-[protein] + ATP = O-phospho-L-threonyl-[protein] + ADP + H(+). Functionally, serine/threonine-protein kinase which, in association with cyclin D-like protein cyd-1, is required for the progression through the G1 phase of the cell cycle during postembryonic development by phosphorylating and inhibiting lin-35 and fzr-1. In complex with cyd-1, involved in sex determination during gonadogenesis by regulating the asymmetric division of the somatic gonadal precursor cell (SGP). The protein is Cyclin-dependent kinase 4 homolog of Caenorhabditis elegans.